The primary structure comprises 98 residues: Parvalbumin beta 1 (98 aa).

Ser1 is modified (N-acetylserine). 2 EF-hand domains span residues 32-67 and 67-98; these read KIGLAGKKVFAIIDQDKSDFVEEDELKLFLQVFSAG and GARALTDAETKAGDSDGDGKIGVDEFAQMIKG. The Ca(2+) site is built by Asp45, Asp47, Ser49, Phe51, Glu53, Glu56, Asp80, Asp82, Asp84, Lys86, and Glu91.

Belongs to the parvalbumin family.

In muscle, parvalbumin is thought to be involved in relaxation after contraction. It binds two calcium ions. The sequence is that of Parvalbumin beta 1 from Macruronus magellanicus (Patagonian grenadier).